The sequence spans 559 residues: POU domain protein 1 (559 aa).

The POU-specific domain occupies 259–333; the sequence is EDLPSSDDLE…LLQKWLHEAD (75 aa). Positions 351 to 410 form a DNA-binding region, homeobox; that stretch reads KRKKRTSIEANVKSILESSFMKLSKPSAQDISSLAEKLSLEKEVVRVWFCNRRQKEKRIT.

The protein belongs to the POU transcription factor family.

It localises to the nucleus. This Dugesia japonica (Planarian) protein is POU domain protein 1 (POU1).